The primary structure comprises 442 residues: tRNA modification GTPase MnmE (442 aa).

(6S)-5-formyl-5,6,7,8-tetrahydrofolate contacts are provided by Arg21, Glu79, and Lys118. The TrmE-type G domain occupies Gly214 to Asn367. Position 224 (Asn224) interacts with K(+). GTP is bound by residues Asn224–Ser229, Ser243–Thr249, and Asp268–Gly271. Ser228 is a Mg(2+) binding site. Residues Ser243, Ile245, and Thr248 each coordinate K(+). Residue Thr249 coordinates Mg(2+). Residue Lys442 coordinates (6S)-5-formyl-5,6,7,8-tetrahydrofolate.

The protein belongs to the TRAFAC class TrmE-Era-EngA-EngB-Septin-like GTPase superfamily. TrmE GTPase family. In terms of assembly, homodimer. Heterotetramer of two MnmE and two MnmG subunits. It depends on K(+) as a cofactor.

The protein localises to the cytoplasm. Its function is as follows. Exhibits a very high intrinsic GTPase hydrolysis rate. Involved in the addition of a carboxymethylaminomethyl (cmnm) group at the wobble position (U34) of certain tRNAs, forming tRNA-cmnm(5)s(2)U34. The polypeptide is tRNA modification GTPase MnmE (Campylobacter jejuni subsp. jejuni serotype O:2 (strain ATCC 700819 / NCTC 11168)).